An 85-amino-acid polypeptide reads, in one-letter code: SPbeta prophage-derived uncharacterized protein YoqG (85 aa).

The polypeptide is SPbeta prophage-derived uncharacterized protein YoqG (yoqG) (Bacillus subtilis (strain 168)).